The primary structure comprises 418 residues: Serine hydroxymethyltransferase (418 aa).

(6S)-5,6,7,8-tetrahydrofolate-binding positions include L121 and 125-127 (GHL). K230 carries the N6-(pyridoxal phosphate)lysine modification. A (6S)-5,6,7,8-tetrahydrofolate-binding site is contributed by 355–357 (SPF).

Belongs to the SHMT family. As to quaternary structure, homodimer. It depends on pyridoxal 5'-phosphate as a cofactor.

The protein resides in the cytoplasm. The enzyme catalyses (6R)-5,10-methylene-5,6,7,8-tetrahydrofolate + glycine + H2O = (6S)-5,6,7,8-tetrahydrofolate + L-serine. It participates in one-carbon metabolism; tetrahydrofolate interconversion. The protein operates within amino-acid biosynthesis; glycine biosynthesis; glycine from L-serine: step 1/1. In terms of biological role, catalyzes the reversible interconversion of serine and glycine with tetrahydrofolate (THF) serving as the one-carbon carrier. This reaction serves as the major source of one-carbon groups required for the biosynthesis of purines, thymidylate, methionine, and other important biomolecules. Also exhibits THF-independent aldolase activity toward beta-hydroxyamino acids, producing glycine and aldehydes, via a retro-aldol mechanism. The sequence is that of Serine hydroxymethyltransferase from Streptococcus pyogenes serotype M6 (strain ATCC BAA-946 / MGAS10394).